Reading from the N-terminus, the 536-residue chain is Octopamine receptor beta-2R (536 aa).

Residues 1-26 (MLLCDGLGPEPPRQRHRNRTSAARIR) form a disordered region. The Extracellular segment spans residues 1 to 157 (MLLCDGLGPE…LDNIVWVFKA (157 aa)). Over residues 14 to 26 (QRHRNRTSAARIR) the composition is skewed to basic residues. N-linked (GlcNAc...) asparagine glycosylation is found at Asn-18, Asn-92, Asn-113, and Asn-126. The helical transmembrane segment at 158–178 (FVMLLIIIAAICGNLLVIISV) threads the bilayer. The Cytoplasmic portion of the chain corresponds to 179–190 (MRVRKLRVITNY). The chain crosses the membrane as a helical span at residues 191–211 (FVVSLAMADIMVAIMAMTFNF). The Extracellular segment spans residues 212 to 233 (SVQVTGRWNFSPFLCDLWNSLD). Residues 234-256 (VYFSTASILHLCCISVDRYYAIV) traverse the membrane as a helical segment. Residues 257 to 270 (KPLKYPISMTKRVV) lie on the Cytoplasmic side of the membrane. Residues 271–291 (GIMLLNTWISPALLSFLPIFI) traverse the membrane as a helical segment. At 292–320 (GWYTTPQHQQFVIQNPTQCSFVVNKYYAV) the chain is on the extracellular side. A helical transmembrane segment spans residues 321–341 (ISSSISFWIPCTIMIFTYLAI). The Cytoplasmic segment spans residues 342-412 (FREANRQEKQ…MKREHKAART (71 aa)). Residues 413 to 433 (LGIIMGTFILCWLPFFLWYTL) form a helical membrane-spanning segment. The Extracellular portion of the chain corresponds to 434–444 (SMTCEECQVPD). Residues 445–465 (IVVSILFWIGYFNSTLNPLIY) form a helical membrane-spanning segment. The Cytoplasmic segment spans residues 466-536 (AYFNRDFREA…RRQSQMVDNL (71 aa)).

Belongs to the G-protein coupled receptor 1 family. As to expression, in the adult, expressed in the superior protocerebrum and the optic lobe medulla of the central nervous system, nurse cells of egg chambers in the ovary at oogenic stages 1-10, and spermatogonia and spermatocytes in the testis. Expressed in the oviduct epithelium. Also expressed in the spermatheca. Expressed in embryonic and larval ventral nerve cord and brain lobe, embryonic and larval salivary glands and larval imaginal disk and midgut. Also expressed in larval synaptic boutons.

Its subcellular location is the cell membrane. Its function is as follows. Autoreceptor for octopamine (OA), which is a neurotransmitter, neurohormone, and neuromodulator in invertebrates. Essential for ovulation and fertilization. During ovulation it mediates the OA-induced relaxation of the oviduct visceral muscles, by increasing cAMP levels and activating effectors such as calmodulin-dependent kinase II (CaMKII) and cAMP-dependent protein kinase A (PKA) pathways. Positively regulates synaptic growth; an action that is antagonized by Octbeta1R. The protein is Octopamine receptor beta-2R of Drosophila melanogaster (Fruit fly).